Reading from the N-terminus, the 449-residue chain is Phosphoglucosamine mutase (449 aa).

Serine 104 functions as the Phosphoserine intermediate in the catalytic mechanism. The Mg(2+) site is built by serine 104, aspartate 243, aspartate 245, and aspartate 247. Serine 104 carries the phosphoserine modification.

The protein belongs to the phosphohexose mutase family. It depends on Mg(2+) as a cofactor. In terms of processing, activated by phosphorylation.

It carries out the reaction alpha-D-glucosamine 1-phosphate = D-glucosamine 6-phosphate. In terms of biological role, catalyzes the conversion of glucosamine-6-phosphate to glucosamine-1-phosphate. This is Phosphoglucosamine mutase from Xanthomonas campestris pv. campestris (strain 8004).